Here is a 121-residue protein sequence, read N- to C-terminus: UPF0295 protein ABC1323 (121 aa).

2 helical membrane-spanning segments follow: residues 14 to 34 (TFAL…IFFK) and 41 to 61 (VIAM…YFFI).

This sequence belongs to the UPF0295 family.

It localises to the cell membrane. This Shouchella clausii (strain KSM-K16) (Alkalihalobacillus clausii) protein is UPF0295 protein ABC1323.